A 234-amino-acid polypeptide reads, in one-letter code: DNA repair and recombination protein RadB (234 aa).

The protein belongs to the eukaryotic RecA-like protein family. RadB subfamily.

Its function is as follows. Involved in DNA repair and in homologous recombination. May regulate the cleavage reactions of the branch-structured DNA. Has a very weak ATPase activity that is not stimulated by DNA. Binds DNA but does not promote DNA strands exchange. This chain is DNA repair and recombination protein RadB, found in Methanobrevibacter smithii (strain ATCC 35061 / DSM 861 / OCM 144 / PS).